The following is a 400-amino-acid chain: uncharacterized protein (400 aa).

The 220-residue stretch at 161 to 380 folds into the TR mART core domain; sequence NDLLNIIDIV…YVVKVIVMRL (220 aa).

This is an uncharacterized protein from Acanthamoeba polyphaga (Amoeba).